The chain runs to 607 residues: Fatty acid amide hydrolase (607 aa).

Active-site charge relay system residues include lysine 204 and serine 280. Glycine 301 to serine 304 is a binding site for substrate. Serine 304 functions as the Acyl-ester intermediate in the catalytic mechanism.

It belongs to the amidase family. In terms of assembly, forms homodimers.

The protein resides in the endoplasmic reticulum membrane. The protein localises to the cell membrane. It carries out the reaction N-(9Z,12Z-octadecadienoyl)-ethanolamine + H2O = ethanolamine + (9Z,12Z)-octadecadienoate. Its function is as follows. Catalyzes the hydrolysis of bioactive endogenous fatty acid amides to their corresponding acids. The hydrolysis of endogenous amidated lipids terminates their participation as lipid mediators in various signaling systems. Converts a wide range of N-acylethanolamines (NAEs) to their corresponding free fatty acids and ethanolamine. This is Fatty acid amide hydrolase from Medicago truncatula (Barrel medic).